Reading from the N-terminus, the 538-residue chain is MPTNCISYPETNYFTPLILDYLSEKKELSNFYHRFPEIENFGAQITEKKKSYDHTIRKDLIQVLNDQYSKLTVSENTRANIDALESKNTFTVVTGHQLNLFTGPLYFLYKIISTINLTKKLKEKYPENNFVPIYWMATEDHDFEEINFFNLNGKKFKWNNADDRAGKTAVGGLSTEGLDEVFKLFSAEIGGGENAEFLKSTFEKGYLEHDTLSDATRFIANEIFGKYGLVIVAAGDKRLKKHFIPNVGSELVEHSSHKQTTETLQKINSLGYNIQVNPRDINLFYLTDEIRERIIERDGNYFVHETEISWTKEEILQELKDHPERFSPNVMTRPLYQEVILPNLCYIGGGGELAYWLELKSYFEAENVTFPMLLLRNSAMLQTGKQNDKREKLKISIQELFLKQHELINRKVRKISDIDIDFSGQKEHLVEQFQHMYDLAEKTDESFIGAVKAQEVKQLKGLDHLEKRLLKAQKRKLKDEVERIAELQNDLFPNRSLQERQTNFSEFYVEYGEELINKLMEELDPLESNFKILTFGRE.

Residues L462–L533 are a coiled coil.

The protein belongs to the BshC family.

The sequence is that of Putative cysteine ligase BshC from Christiangramia forsetii (strain DSM 17595 / CGMCC 1.15422 / KT0803) (Gramella forsetii).